Consider the following 737-residue polypeptide: Glycogen [starch] synthase, muscle (737 aa).

Ser8 is modified (phosphoserine; by AMPK and PKA). At Ser11 the chain carries Phosphoserine. Residue Lys39 coordinates UDP. The UDP-alpha-D-glucose site is built by His205 and Arg211. His291, Glu292, Gln294, His297, and Lys301 together coordinate alpha-D-glucose 6-phosphate. Residue Arg331 coordinates UDP. A UDP-alpha-D-glucose-binding site is contributed by Arg331. At Ser412 the chain carries Phosphoserine. Alpha-D-glucose 6-phosphate is bound at residue His501. Residues Glu510, Trp512, and Gly513 each contribute to the UDP-alpha-D-glucose site. Position 515 (Thr515) interacts with UDP. Residues Arg582 and Arg586 each coordinate alpha-D-glucose 6-phosphate. The segment at 634–737 is disordered; the sequence is YRYPRPASVP…PTSSLGEERN (104 aa). Ser641 carries the phosphoserine; by DYRK2, GSK3-alpha, GSK3-beta and PASK modification. Phosphoserine; by GSK3-alpha and GSK3-beta is present on residues Ser645 and Ser649. Ser652 carries the phosphoserine modification. Ser653 carries the post-translational modification Phosphoserine; by GSK3-alpha and GSK3-beta. Ser657 carries the phosphoserine; by CK2 modification. A compositionally biased stretch (acidic residues) spans 658-681; sequence EDEEDPRNGPLEEDGERYDEDEEA. Basic and acidic residues predominate over residues 682–695; sequence AKDRRNIRAPEWPR. Residue Ser698 is modified to Phosphoserine. The segment covering 698 to 714 has biased composition (polar residues); that stretch reads SCTSSTSGSKRNSVDTA. Thr700 is subject to Phosphothreonine. At Ser710 the chain carries Phosphoserine. Positions 715 to 737 are enriched in low complexity; the sequence is TSSSLSTPSEPLSPTSSLGEERN. Thr721 carries the post-translational modification Phosphothreonine. Phosphoserine is present on residues Ser727 and Ser731.

The protein belongs to the glycosyltransferase 3 family. Part of the GYS1-GYG1 complex, a heterooctamer composed of a tetramer of GYS1 and 2 dimers of GYG1, where each GYS1 protomer binds to one GYG1 subunit (via GYG1 C-terminus); the GYS1 tetramer may dissociate from GYG1 dimers to continue glycogen polymerization on its own. Post-translationally, phosphorylation at Ser-8 by AMPK inactivates the enzyme activity. Primed phosphorylation at Ser-657 (site 5) by CSNK2A1 and CSNK2A2 is required for inhibitory phosphorylation at Ser-641 (site 3a), Ser-645 (site 3b), Ser-649 (site 3c) and Ser-653 (site 4) by GSK3A an GSK3B. Phosphorylated at Ser-641 by PASK, leading to inactivation; phosphorylation by PASK is inhibited by glycogen. Phosphorylated at Ser-641 by DYRK2, leading to inactivation. Dephosphorylation at Ser-641 and Ser-645 by PP1 activates the enzyme.

It catalyses the reaction [(1-&gt;4)-alpha-D-glucosyl](n) + UDP-alpha-D-glucose = [(1-&gt;4)-alpha-D-glucosyl](n+1) + UDP + H(+). Its pathway is glycan biosynthesis; glycogen biosynthesis. With respect to regulation, allosteric activation by glucose-6-phosphate. Phosphorylation reduces the activity towards UDP-glucose. When in the non-phosphorylated state, glycogen synthase does not require glucose-6-phosphate as an allosteric activator; when phosphorylated it does. Glycogen synthase participates in the glycogen biosynthetic process along with glycogenin and glycogen branching enzyme. Extends the primer composed of a few glucose units formed by glycogenin by adding new glucose units to it. In this context, glycogen synthase transfers the glycosyl residue from UDP-Glc to the non-reducing end of alpha-1,4-glucan. The protein is Glycogen [starch] synthase, muscle (GYS1) of Pongo abelii (Sumatran orangutan).